Reading from the N-terminus, the 521-residue chain is Insulinoma-associated protein 1 (521 aa).

Over residues Met-1–Lys-12 the composition is skewed to basic residues. The segment at Met-1–Val-20 is SNAG domain. Disordered regions lie at residues Met-1–Leu-59, Gly-76–Pro-107, and Ala-180–Ala-230. The tract at residues Pro-2–Val-7 is required and sufficient for interaction with KDM1A. A necessary for interaction with CCND1 region spans residues Pro-43 to Pro-56. Composition is skewed to pro residues over residues Pro-43 to Ala-58 and Gly-76 to Pro-85. Residues Ala-209 to Pro-223 show a composition bias toward low complexity. Residues Phe-272 to Cys-292 form a C2H2-type 1; atypical zinc finger. A C2H2-type 2 zinc finger spans residues Tyr-300–His-322. Residues Arg-320–Glu-369 form a disordered region. Basic and acidic residues predominate over residues Pro-334 to Glu-346. The C2H2-type 3 zinc-finger motif lies at Tyr-373 to His-395. Residues Ala-398–Leu-419 are disordered. Pro residues predominate over residues Ala-404 to Ala-415. C2H2-type zinc fingers lie at residues His-452–His-475 and Phe-480–His-503.

It belongs to the INSM1 family. Interacts (via the N-terminal region) with CCND1 (via cyclin N-terminal domain); the interaction competes with the binding of CCND1 to CDK4 during cell cycle progression and increases its transcriptional repressor activity. Interacts with HDAC3; the interaction increases its transcriptional repressor activity. Interacts (via the SNAG domain) with HDAC1. Interacts (via the SNAG domain) with HDAC2. Interacts (via the SNAG domain) with KDM1A. Interacts (via the SNAG domain) with RCOR1. Interacts with SORBS1. As to expression, expressed in adrenal gland. Expressed in the dentate gyrus of the hippocampus and the wall of the lateral ventricle. Expressed in pancreatic and intestinal endocrine cells.

The protein resides in the nucleus. Its function is as follows. Sequence-specific DNA-binding transcriptional regulator that plays a key role in neurogenesis and neuroendocrine cell differentiation during embryonic and/or fetal development. Binds to the consensus sequence 5'-[TG][TC][TC][TT][GA]GGG[CG]A-3' in target promoters. Acts as a transcriptional repressor of NEUROD1 and INS expression via its interaction with cyclin CCND1 in a cell cycle-independent manner. Negatively regulates skeletal muscle-specific gene expression in endocrine cells of the pituitary by inhibiting the Notch signaling pathway. Represses target gene transcription by recruiting chromatin-modifying factors, such as HDAC1, HDAC2, HDAC3, KDM1A and RCOR1 histone deacetylases. Binds to its own promoter, suggesting autoregulation as a self-control feedback mechanism. Competes with histone H3 for the same binding site on the histone demethylase complex formed by KDM1A and RCOR1, and thereby inhibits demethylation of histone H3 at 'Lys-4'. Promotes the generation and expansion of neuronal basal progenitor cells in the developing neocortex. Involved in the differentiation of endocrine cells of the developing anterior pituitary gland, of the pancreas and intestine, and of sympatho-adrenal cells in the peripheral nervous system. Promotes cell cycle signaling arrest and inhibition of cellular proliferation. This Mus musculus (Mouse) protein is Insulinoma-associated protein 1 (Insm1).